The primary structure comprises 500 residues: Amino-acid acetyltransferase, mitochondrial (500 aa).

Residues 1 to 19 (MQKPSLSQDLIWILKSVQS) constitute a mitochondrion transit peptide. The region spanning 336 to 496 (FLGPKCLTDG…YMSVIDKIQP (161 aa)) is the N-acetyltransferase domain.

This sequence belongs to the acetyltransferase family.

It localises to the mitochondrion. The enzyme catalyses L-glutamate + acetyl-CoA = N-acetyl-L-glutamate + CoA + H(+). It participates in amino-acid biosynthesis; L-arginine biosynthesis; N(2)-acetyl-L-ornithine from L-glutamate: step 1/4. Functionally, N-acetylglutamate synthase involved in arginine biosynthesis. This chain is Amino-acid acetyltransferase, mitochondrial (arg6), found in Schizosaccharomyces pombe (strain 972 / ATCC 24843) (Fission yeast).